Here is a 104-residue protein sequence, read N- to C-terminus: L-rhamnose mutarotase (104 aa).

Tyr18 contacts substrate. Catalysis depends on His22, which acts as the Proton donor. Substrate contacts are provided by residues Tyr41 and 76 to 77; that span reads WW.

Belongs to the rhamnose mutarotase family. Homodimer.

The protein localises to the cytoplasm. It catalyses the reaction alpha-L-rhamnose = beta-L-rhamnose. Its pathway is carbohydrate metabolism; L-rhamnose metabolism. In terms of biological role, involved in the anomeric conversion of L-rhamnose. This Salmonella dublin (strain CT_02021853) protein is L-rhamnose mutarotase.